A 188-amino-acid polypeptide reads, in one-letter code: Pyridoxal 5'-phosphate synthase subunit PdxT (188 aa).

Position 46–48 (46–48) interacts with L-glutamine; it reads GES. The Nucleophile role is filled by C78. L-glutamine is bound by residues R105 and 134–135; that span reads IR. Active-site charge relay system residues include H170 and E172.

This sequence belongs to the glutaminase PdxT/SNO family. In the presence of PdxS, forms a dodecamer of heterodimers. Only shows activity in the heterodimer.

It catalyses the reaction aldehydo-D-ribose 5-phosphate + D-glyceraldehyde 3-phosphate + L-glutamine = pyridoxal 5'-phosphate + L-glutamate + phosphate + 3 H2O + H(+). It carries out the reaction L-glutamine + H2O = L-glutamate + NH4(+). Its pathway is cofactor biosynthesis; pyridoxal 5'-phosphate biosynthesis. In terms of biological role, catalyzes the hydrolysis of glutamine to glutamate and ammonia as part of the biosynthesis of pyridoxal 5'-phosphate. The resulting ammonia molecule is channeled to the active site of PdxS. This is Pyridoxal 5'-phosphate synthase subunit PdxT from Thermotoga neapolitana (strain ATCC 49049 / DSM 4359 / NBRC 107923 / NS-E).